The sequence spans 180 residues: Large ribosomal subunit protein uL6 (180 aa).

The protein belongs to the universal ribosomal protein uL6 family. Part of the 50S ribosomal subunit.

This protein binds to the 23S rRNA, and is important in its secondary structure. It is located near the subunit interface in the base of the L7/L12 stalk, and near the tRNA binding site of the peptidyltransferase center. The chain is Large ribosomal subunit protein uL6 from Thermus aquaticus.